We begin with the raw amino-acid sequence, 89 residues long: MAKKSMIAREVKRQALVERYAEQRAELKAQGDYIGLSKLPRNSSAVRLHNRCSITGRPHGYIGKFGISRIKFRDLAHKGQIPGVKKASW.

It belongs to the universal ribosomal protein uS14 family. Part of the 30S ribosomal subunit. Contacts proteins S3 and S10.

Functionally, binds 16S rRNA, required for the assembly of 30S particles and may also be responsible for determining the conformation of the 16S rRNA at the A site. This Exiguobacterium sibiricum (strain DSM 17290 / CCUG 55495 / CIP 109462 / JCM 13490 / 255-15) protein is Small ribosomal subunit protein uS14.